We begin with the raw amino-acid sequence, 336 residues long: Nicotinate-nucleotide--dimethylbenzimidazole phosphoribosyltransferase (336 aa).

Glutamate 304 functions as the Proton acceptor in the catalytic mechanism.

Belongs to the CobT family.

It catalyses the reaction 5,6-dimethylbenzimidazole + nicotinate beta-D-ribonucleotide = alpha-ribazole 5'-phosphate + nicotinate + H(+). It functions in the pathway nucleoside biosynthesis; alpha-ribazole biosynthesis; alpha-ribazole from 5,6-dimethylbenzimidazole: step 1/2. In terms of biological role, catalyzes the synthesis of alpha-ribazole-5'-phosphate from nicotinate mononucleotide (NAMN) and 5,6-dimethylbenzimidazole (DMB). This chain is Nicotinate-nucleotide--dimethylbenzimidazole phosphoribosyltransferase, found in Mesorhizobium japonicum (strain LMG 29417 / CECT 9101 / MAFF 303099) (Mesorhizobium loti (strain MAFF 303099)).